Here is a 495-residue protein sequence, read N- to C-terminus: Cyclic GMP-AMP synthase (495 aa).

The tract at residues 1–128 (MAARRGKSTR…AGATELAAPA (128 aa)) is disordered. Positions 1-134 (MAARRGKSTR…AAPARMEAPP (134 aa)) are DNA-binding. At Lys-7 the chain carries N6-acetyllysine. Ser-13 is modified (phosphoserine). Composition is skewed to basic and acidic residues over residues 52-76 (CRRE…RAED) and 105-116 (RAREARSARELR). Lys-56 carries the post-translational modification N6-acetyllysine. Phosphoserine is present on Ser-57. The required for association with the cell membrane stretch occupies residues 57–68 (SGPDPREKPQVR). Residues 103 to 134 (SCRAREARSARELRPQAGATELAAPARMEAPP) form a required for activation upon DNA viral infection region. The Nuclear export signal signature appears at 143–148 (LEKVRL). Lys-145 carries the N6-lactoyllysine modification. Residues 147–190 (RLSRHEISEAAEVVNWVVEHLLRRLQGGESEFKGVALLRTGSYY) form a DNA-binding region. Residue Glu-165 is modified to PolyADP-ribosyl glutamic acid. Thr-186 lines the GTP pocket. Ser-188 bears the Phosphoserine mark. Ser-188 is a binding site for ATP. At Tyr-190 the chain carries Phosphotyrosine. The Mg(2+) site is built by Glu-200 and Asp-202. Asp-202 is a 2',3'-cGAMP binding site. Lys-206 participates in a covalent cross-link: Glycyl lysine isopeptide (Lys-Gly) (interchain with G-Cter in SUMO). Lys-260 participates in a covalent cross-link: Glycyl lysine isopeptide (Lys-Gly) (interchain with G-Cter in ubiquitin). At Glu-261 the chain carries 5-glutamyl polyglutamate. The Nuclear localization signal signature appears at 268–278 (GVTVERKRRGS). Ser-278 is modified (phosphoserine). Position 294 (Asp-294) interacts with GTP. Asp-294 contributes to the Mg(2+) binding site. Asp-294 contacts 2',3'-cGAMP. The tract at residues 316–357 (SQWLGAKVKNNLKRQPFYLVPKHAKEGSGFQEETWRLSFSHI) is interaction with collided ribosomes. A Glycyl lysine isopeptide (Lys-Gly) (interchain with G-Cter in SUMO); alternate cross-link involves residue Lys-322. Lys-322 participates in a covalent cross-link: Glycyl lysine isopeptide (Lys-Gly) (interchain with G-Cter in ubiquitin); alternate. 2 residues coordinate 2',3'-cGAMP: Lys-337 and Arg-351. Position 351 to 358 (351 to 358 (RLSFSHIE)) interacts with GTP. Glu-358 is an ATP binding site. Lys-359 carries the N6-acetyllysine modification. Lys-359 is covalently cross-linked (Glycyl lysine isopeptide (Lys-Gly) (interchain with G-Cter in SUMO); alternate). Residue Lys-359 forms a Glycyl lysine isopeptide (Lys-Gly) (interchain with G-Cter in ubiquitin); alternate linkage. The segment at 359–382 (KDILKNHGQSKTCCEIDGVKCCRK) is DNA-binding. His-365 serves as a coordination point for Zn(2+). Lys-369 carries the N6-acetyllysine modification. Residue Lys-369 forms a Glycyl lysine isopeptide (Lys-Gly) (interchain with G-Cter in SUMO) linkage. 3 residues coordinate Zn(2+): Cys-371, Cys-372, and Cys-379. S-palmitoyl cysteine attachment occurs at residues Cys-379 and Cys-380. Glycyl lysine isopeptide (Lys-Gly) (interchain with G-Cter in ubiquitin) cross-links involve residues Lys-386, Lys-389, Lys-396, and Lys-397. The residue at position 389 (Lys-389) is an N6-acetyllysine. Lys-389 provides a ligand contact to ATP. At Ser-410 the chain carries Phosphoserine. Position 410–414 (410–414 (SYHVK)) interacts with ATP. Residue Cys-449 is the site of S-palmitoyl cysteine attachment. Lys-481 carries the N6-methyllysine modification.

This sequence belongs to the mab-21 family. In terms of assembly, monomer in the absence of DNA. Homodimer in presence of dsDNA: forms a 2:2 dimer with two enzymes binding to two DNA molecules. Interacts with nucleosomes; interaction is mainly mediated via histones H2A and H2B and inactivates the nucleotidyltransferase activity by blocking DNA-binding and subsequent activation. Interacts with PQBP1 (via WW domain). Interacts with TRIM14; this interaction recruits USP14, leading to deubiquitinate and stabilize CGAS and promote type I interferon production. Interacts with ZCCHC3; promoting sensing of dsDNA by CGAS. Interacts (when not monomethylated) with (poly-ADP-ribosylated) PARP1; interaction takes place in the nucleus and prevents the formation of the PARP1-TIMELESS complex. Interacts (when monomethylated) with SGF29; interaction with SGF29 prevents interaction with PARP1. Interacts with PCBP2; preventing the formation of liquid-like droplets in which CGAS is activated. Interacts with IRGM; promoting CGAS degradation. Mg(2+) serves as cofactor. It depends on Mn(2+) as a cofactor. Requires Zn(2+) as cofactor. Post-translationally, the N-terminal disordered part (1-134) is phosphorylated by AURKB during the G2-M transition, blocking CGAS liquid phase separation and preventing activation. Phosphorylation at Tyr-190 by BLK promotes cytosolic retention. Localizes into the nucleus following dephosphorylation at Tyr-190. Phosphorylation at Ser-410 activates the nucleotidyltransferase activity. Dephosphorylation at Ser-410 by PPP6C impairs its ability to bind GTP, thereby inactivating it. Phosphorylation at Ser-188 by PRKDC inhibits its cyclic GMP-AMP synthase activity by impairing homodimerization and activation. Phosphorylation at Ser-278 by AKT (AKT1, AKT2 or AKT3) suppresses the nucleotidyltransferase activity. Phosphorylation at Ser-278 by CDK1 during mitosis leads to its inhibition, thereby preventing CGAS activation by self-DNA during mitosis. Dephosphorylated at Ser-278 by protein phosphatase PP1 upon mitotic exit. In terms of processing, ubiquitinated at Lys-389 via 'Lys-48'-linked polyubiquitin chains, leading to its SQSTM1-mediated autophagic degradation. Interaction with TRIM14 promotes recruitment of USP14, leading to deubiquitinate Lys-389 and stabilize CGAS. Ubiquitinated at Lys-359 by RNF185 via 'Lys-27'-linked polyubiquitination, promoting CGAS cyclic GMP-AMP synthase activity. Monoubiquitination at Lys-322 by TRIM56 promotes oligomerization and subsequent activation. Monoubiquitination by TRIM41 promotes CGAS activation. Ubiquitination at Lys-260 via 'Lys-48'-linked polyubiquitination promotes its degradation. Deubiquitination at Lys-260 by USP29 promotes its stabilization. Deubiquitinated by USP27X, promoting its stabilization. Ubiquitinated at Lys-386 via 'Lys-63'-linked polyubiquitin chains by MARCHF8, leading to the inhibition of its DNA binding ability. In cycling cells, nucleosome-bound CGAS is ubiquitinated at Lys-396 and Lys-397 via 'Lys-48'-linked polyubiquitin chains by the ECS(SPSB3) complex, leading to its degradation: ubiquitination and degradation of nuclear CGAS during G1 and G2 phases is required to promote low intranuclear CGAS abundance before the next mitotic cycle. Sumoylated at Lys-206 by TRIM38 in uninfected cells and during the early phase of viral infection, promoting its stability by preventing ubiquitination at Lys-260 and subsequent degradation. Desumoylated by SENP2 during the late phase of viral infection. Sumoylation at Lys-322, Lys-359 and Lys-369 prevents DNA-binding, oligomerization and nucleotidyltransferase activity. Desumoylation at Lys-322, Lys-359 and Lys-369 by SENP7 relieves inhibition and activates CGAS. Post-translationally, polyglutamylated by TTLL6 at Glu-261, leading to impair DNA-binding activity. Deglutamylated by AGBL5/CCP5 and AGBL6/CCP6. In terms of processing, acetylation at Lys-359, Lys-369 and Lys-389 inhibits the cyclic GMP-AMP synthase activity. Deacetylated upon cytosolic DNA challenge such as viral infections. Acetylation by KAT5 increases the cyclic GMP-AMP synthase activity by promoting DNA-binding and subsequent activation. Proteolytically cleaved by apoptotic caspases during apoptosis, leading to its inactivation. The damage of the nucleus and the mitochondria during apoptosis leads to leakage of nuclear and mitochondrial DNA, which activate CGAS: cleavage and inactivation during apoptosis in required to prevent cytokine overproduction. Cleaved by CASP7 and CASP3 during virus-induced apoptosis, thereby inactivating it and preventing cytokine overproduction. Cleaved by CASP1 upon DNA virus infection; the cleavage impairs cGAMP production. Also cleaved by the pyroptotic CASP4 during non-canonical inflammasome activation; does not cut at the same sites than CASP1. Post-translationally, degraded via selective autophagy following interaction with IRGM. IRGM promotes CGAS recruitment to autophagosome membranes, promoting its SQSTM1/p62-dependent autophagic degradation. In terms of processing, poly-ADP-ribosylation at Glu-165 by PARP1 impairs DNA-binding, thereby preventing the cyclic GMP-AMP synthase activity. Palmitoylation at Cys-449 by ZDHHC18 impairs DNA-binding, thereby preventing the cyclic GMP-AMP synthase activity. Palmitoylation at Cys-379 and Cys-380 by ZDHHC9 promotes homodimerization and cyclic GMP-AMP synthase activity. Depalmitoylation at Cys-379 and Cys-380 by LYPLAL1 impairs homodimerization and cyclic GMP-AMP synthase activity. Post-translationally, monomethylated at Lys-481 by SETD7. Monomethylation promotes interaction with SGF29, preventing interaction between PARP1 nad SGF29. Demethylation by RIOX1 promotes interaction with PARP1, followed by PARP1 inactivation. In terms of processing, lactylation by AARS2 prevents ability to undergo liquid-liquid phase separation (LLPS), thereby inhibiting CGAS activation.

Its subcellular location is the nucleus. It localises to the chromosome. The protein localises to the cell membrane. It is found in the cytoplasm. The protein resides in the cytosol. It carries out the reaction GTP + ATP = 2',3'-cGAMP + 2 diphosphate. The enzyme catalyses GTP + ATP = pppGp(2'-5')A + diphosphate. It catalyses the reaction pppGp(2'-5')A = 2',3'-cGAMP + diphosphate. The enzyme activity is strongly increased by double-stranded DNA (dsDNA), but not by single-stranded DNA or RNA. DNA-binding induces the formation of liquid-like droplets in which CGAS is activated. Liquid-like droplets also create a selective environment that restricts entry of negative regulators, such as TREX1 or BANF1/BAF, allowing sensing of DNA. A number of mechanisms exist to restrict its activity toward self-DNA. The nucleotidyltransferase activity is inhibited in the nucleus via its association with nucleosomes: interacts with the acidic patch of histones H2A and H2B, thereby blocking DNA-binding and subsequent activation. CGAS is also inactive when associated with mitotic chromatin. Chromatin-bound CGAS cannot be activated by exogenous DNA in mitotic cells: phosphorylation of the N-terminal disordered part by AURKB during the G2-M transition blocks CGAS liquid phase separation and activation. Activity toward self-DNA is inhibited by BANF1/BAF upon acute loss of nuclear membrane integrity: BANF1/BAF acts by outcompeting CGAS for DNA-binding, thereby preventing CGAS activation. DNA-induced activation at micronuclei is also limited by TREX1, which degrades micronuclear DNA upon nuclear envelope rupture, thereby preventing CGAS activation. CGAS can be released from nucleosomes and activated by MRE11 component of the MRN complex, which displaces CGAS from acidic-patch-mediated sequestration. Acetylation at Lys-359, Lys-369 and Lys-389 inhibits the cyclic GMP-AMP synthase activity. Acetylation by KAT5 increases the cyclic GMP-AMP synthase activity by promoting DNA-binding and subsequent activation. Phosphorylation at Ser-278 suppresses the nucleotidyltransferase activity. Phosphorylation at Ser-410 promotes the cyclic GMP-AMP synthase activity. Phosphorylation at Ser-188 inhibits its cyclic GMP-AMP synthase activity. Ubiquitination at Lys-359 via 'Lys-27'-linked polyubiquitination enhances the cyclic GMP-AMP synthase activity. Monoubiquitination at Lys-322 promotes oligomerization and subsequent activation. Sumoylation at Lys-322, Lys-359 and Lys-369 prevents DNA-binding, oligomerization and nucleotidyltransferase activity. The enzyme activity is impaired by the cleavage by CASP1. In addition to DNA, also activated by collided ribosomes upon translation stress: specifically binds collided ribosomes, promoting its activation and triggering type-I interferon production. Functionally, nucleotidyltransferase that catalyzes the formation of cyclic GMP-AMP (2',3'-cGAMP) from ATP and GTP and plays a key role in innate immunity. Catalysis involves both the formation of a 2',5' phosphodiester linkage at the GpA step and the formation of a 3',5' phosphodiester linkage at the ApG step, producing c[G(2',5')pA(3',5')p]. Acts as a key DNA sensor: directly binds double-stranded DNA (dsDNA), inducing the formation of liquid-like droplets in which CGAS is activated, leading to synthesis of 2',3'-cGAMP, a second messenger that binds to and activates STING1, thereby triggering type-I interferon production. Preferentially binds long dsDNA (around 45 bp) and forms ladder-like networks that function cooperatively to stabilize individual cGAS-dsDNA complexes. Acts as a key foreign DNA sensor, the presence of double-stranded DNA (dsDNA) in the cytoplasm being a danger signal that triggers the immune responses. Has antiviral activity by sensing the presence of dsDNA from DNA viruses in the cytoplasm. Also acts as an innate immune sensor of infection by retroviruses by detecting the presence of reverse-transcribed DNA in the cytosol. Detection of retroviral reverse-transcribed DNA in the cytosol may be indirect and be mediated via interaction with PQBP1, which directly binds reverse-transcribed retroviral DNA. Also detects the presence of DNA from bacteria. 2',3'-cGAMP can be transferred from producing cells to neighboring cells through gap junctions, leading to promote STING1 activation and convey immune response to connecting cells. 2',3'-cGAMP can also be transferred between cells by virtue of packaging within viral particles contributing to IFN-induction in newly infected cells in a cGAS-independent but STING1-dependent manner. Also senses the presence of neutrophil extracellular traps (NETs) that are translocated to the cytosol following phagocytosis, leading to synthesis of 2',3'-cGAMP. In addition to foreign DNA, can also be activated by endogenous nuclear or mitochondrial DNA. When self-DNA leaks into the cytosol during cellular stress (such as mitochondrial stress, DNA damage, mitotic arrest or senescence), or is present in form of cytosolic micronuclei, CGAS is activated leading to a state of sterile inflammation. Acts as a regulator of cellular senescence by binding to cytosolic chromatin fragments that are present in senescent cells, leading to trigger type-I interferon production via STING1 and promote cellular senescence. Also involved in the inflammatory response to genome instability and double-stranded DNA breaks: acts by localizing to micronuclei arising from genome instability. Micronuclei, which are frequently found in cancer cells, consist of chromatin surrounded by their own nuclear membrane: following breakdown of the micronuclear envelope, a process associated with chromothripsis, CGAS binds self-DNA exposed to the cytosol, leading to 2',3'-cGAMP synthesis and subsequent activation of STING1 and type-I interferon production. In a healthy cell, CGAS is however kept inactive even in cellular events that directly expose it to self-DNA, such as mitosis, when cGAS associates with chromatin directly after nuclear envelope breakdown or remains in the form of postmitotic persistent nuclear cGAS pools bound to chromatin. Nuclear CGAS is inactivated by chromatin via direct interaction with nucleosomes, which block CGAS from DNA binding and thus prevent CGAS-induced autoimmunity. Also acts as a suppressor of DNA repair in response to DNA damage: inhibits homologous recombination repair by interacting with PARP1, the CGAS-PARP1 interaction leading to impede the formation of the PARP1-TIMELESS complex. In addition to DNA, also sense translation stress: in response to translation stress, translocates to the cytosol and associates with collided ribosomes, promoting its activation and triggering type-I interferon production. This is Cyclic GMP-AMP synthase from Sus scrofa (Pig).